The following is a 137-amino-acid chain: Large-conductance mechanosensitive channel (137 aa).

The next 2 membrane-spanning stretches (helical) occupy residues 10–30 and 76–96; these read FAMR…AAFG and GVFI…FMAI.

It belongs to the MscL family. In terms of assembly, homopentamer.

It is found in the cell inner membrane. Functionally, channel that opens in response to stretch forces in the membrane lipid bilayer. May participate in the regulation of osmotic pressure changes within the cell. This is Large-conductance mechanosensitive channel from Enterobacter sp. (strain 638).